A 72-amino-acid polypeptide reads, in one-letter code: Translation initiation factor IF-1 (72 aa).

The region spanning 1 to 72 (MAKEEVLEFP…TKGRITYRFK (72 aa)) is the S1-like domain.

This sequence belongs to the IF-1 family. In terms of assembly, component of the 30S ribosomal translation pre-initiation complex which assembles on the 30S ribosome in the order IF-2 and IF-3, IF-1 and N-formylmethionyl-tRNA(fMet); mRNA recruitment can occur at any time during PIC assembly.

Its subcellular location is the cytoplasm. In terms of biological role, one of the essential components for the initiation of protein synthesis. Stabilizes the binding of IF-2 and IF-3 on the 30S subunit to which N-formylmethionyl-tRNA(fMet) subsequently binds. Helps modulate mRNA selection, yielding the 30S pre-initiation complex (PIC). Upon addition of the 50S ribosomal subunit IF-1, IF-2 and IF-3 are released leaving the mature 70S translation initiation complex. The sequence is that of Translation initiation factor IF-1 from Sinorhizobium medicae (strain WSM419) (Ensifer medicae).